A 274-amino-acid chain; its full sequence is Bis(5'-nucleosyl)-tetraphosphatase, symmetrical (274 aa).

Belongs to the Ap4A hydrolase family.

The catalysed reaction is P(1),P(4)-bis(5'-adenosyl) tetraphosphate + H2O = 2 ADP + 2 H(+). Hydrolyzes diadenosine 5',5'''-P1,P4-tetraphosphate to yield ADP. In Buchnera aphidicola subsp. Acyrthosiphon pisum (strain Tuc7), this protein is Bis(5'-nucleosyl)-tetraphosphatase, symmetrical.